Reading from the N-terminus, the 303-residue chain is Elongation factor Ts (303 aa).

Residues 80 to 83 (TDFV) are involved in Mg(2+) ion dislocation from EF-Tu.

The protein belongs to the EF-Ts family.

It localises to the cytoplasm. In terms of biological role, associates with the EF-Tu.GDP complex and induces the exchange of GDP to GTP. It remains bound to the aminoacyl-tRNA.EF-Tu.GTP complex up to the GTP hydrolysis stage on the ribosome. The protein is Elongation factor Ts of Clostridium perfringens (strain ATCC 13124 / DSM 756 / JCM 1290 / NCIMB 6125 / NCTC 8237 / Type A).